The following is a 274-amino-acid chain: Proto-oncogene FRAT1 (274 aa).

Disordered regions lie at residues Met-1–Phe-24, Ala-55–Val-107, Gly-132–His-194, and Gly-232–Ser-274. The span at Glu-7–Ser-23 shows a compositional bias: acidic residues. Residues Asp-191–Leu-214 are involved in GSK-3 binding. Residues Ser-243 and Ser-246 each carry the phosphoserine modification.

Belongs to the GSK-3-binding protein family. Binds DVL1. Binds GSK-3 and prevent GSK-3-dependent phosphorylation. Post-translationally, phosphorylated. In terms of tissue distribution, highly expressed in testis. Lower level of expression in spleen, thymus and brain.

The protein resides in the cytoplasm. Positively regulates the Wnt signaling pathway by stabilizing beta-catenin through the association with GSK-3. May play a role in tumor progression and collaborate with PIM1 and MYC in lymphomagenesis. The protein is Proto-oncogene FRAT1 (Frat1) of Mus musculus (Mouse).